A 287-amino-acid chain; its full sequence is Probable prolyl 4-hydroxylase 3 (287 aa).

Residues 1–16 (MAKLRHSRFQARKWST) lie on the Cytoplasmic side of the membrane. Residues 17 to 37 (LMLVLFMLFMLTIVLLMLLAF) form a helical; Signal-anchor for type II membrane protein membrane-spanning segment. Residues 38–287 (GVFSLPINND…KWMHVGEYKI (250 aa)) are Lumenal-facing. The Fe2OG dioxygenase domain occupies 159–282 (HGEGLQVLHY…KWSSTKWMHV (124 aa)). Fe cation contacts are provided by His-177 and Asp-179. N-linked (GlcNAc...) asparagine glycosylation is present at Asn-218. His-263 provides a ligand contact to Fe cation. 2-oxoglutarate is bound at residue Lys-273.

This sequence belongs to the P4HA family. It depends on Fe(2+) as a cofactor. Requires L-ascorbate as cofactor.

The protein resides in the endoplasmic reticulum membrane. The catalysed reaction is L-prolyl-[collagen] + 2-oxoglutarate + O2 = trans-4-hydroxy-L-prolyl-[collagen] + succinate + CO2. In terms of biological role, catalyzes the post-translational formation of 4-hydroxyproline in -Xaa-Pro-Gly- sequences in proline-rich peptide sequences of plant glycoproteins and other proteins. Hydroxyprolines are important constituent of many plant cell wall glycoproteins such as extensins, hydroxyproline-rich glycoproteins, lectins and arabinogalactan proteins. The polypeptide is Probable prolyl 4-hydroxylase 3 (Arabidopsis thaliana (Mouse-ear cress)).